The chain runs to 238 residues: Type III secretion protein hrcQa (238 aa).

The hrcQa-C stretch occupies residues 66-238; that stretch reads DAEALLSLLG…SHEEHSHHEY (173 aa).

Interacts with hrcQb.

It localises to the cell inner membrane. Functionally, component of the type III secretion system, which is required for effector protein delivery, parasitism, and pathogenicity. Probably participates in the formation of a C-ring-like assembly along with hrcQb. This is Type III secretion protein hrcQa (hrcQa) from Pseudomonas syringae pv. syringae.